Here is a 155-residue protein sequence, read N- to C-terminus: Deoxyuridine 5'-triphosphate nucleotidohydrolase (155 aa).

Substrate is bound by residues 74–76 (RSG), Asn87, and 91–93 (LID).

The protein belongs to the dUTPase family. The cofactor is Mg(2+).

The enzyme catalyses dUTP + H2O = dUMP + diphosphate + H(+). Its pathway is pyrimidine metabolism; dUMP biosynthesis; dUMP from dCTP (dUTP route): step 2/2. Its function is as follows. This enzyme is involved in nucleotide metabolism: it produces dUMP, the immediate precursor of thymidine nucleotides and it decreases the intracellular concentration of dUTP so that uracil cannot be incorporated into DNA. The polypeptide is Deoxyuridine 5'-triphosphate nucleotidohydrolase (Xanthomonas oryzae pv. oryzae (strain MAFF 311018)).